The sequence spans 166 residues: Ribosome-binding factor A (166 aa).

Residues 119–166 form a disordered region; sequence VQAQAKSGVYAGDEDPYVKPRVIGEDEDEDDEDGDDIDRSAPGYEPAH. The span at 143 to 154 shows a compositional bias: acidic residues; that stretch reads EDEDEDDEDGDD.

Belongs to the RbfA family. As to quaternary structure, monomer. Binds 30S ribosomal subunits, but not 50S ribosomal subunits or 70S ribosomes.

The protein localises to the cytoplasm. In terms of biological role, one of several proteins that assist in the late maturation steps of the functional core of the 30S ribosomal subunit. Associates with free 30S ribosomal subunits (but not with 30S subunits that are part of 70S ribosomes or polysomes). Required for efficient processing of 16S rRNA. May interact with the 5'-terminal helix region of 16S rRNA. This is Ribosome-binding factor A from Clavibacter michiganensis subsp. michiganensis (strain NCPPB 382).